A 409-amino-acid polypeptide reads, in one-letter code: DNA primase small subunit (409 aa).

Residues glutamate 46, aspartate 111, and aspartate 113 contribute to the active site. The short motif at 123–133 is the Zinc knuckle motif element; it reads CCSGAQVCSKC.

It belongs to the eukaryotic-type primase small subunit family. In terms of assembly, DNA polymerase alpha:primase is a four subunit enzyme complex, which is assembled throughout the cell cycle, and consists of the two DNA polymerase subunits A POL1 and B POL12, and the DNA primase large PRI2 and small PRI1 subunits.

DNA primase is the polymerase that synthesizes small RNA primers for the Okazaki fragments made during discontinuous DNA replication. In a complex with DNA polymerase alpha (DNA polymerase alpha:primase) constitutes a replicative polymerase. Both primase components participate in formation of the active center, but the ATP-binding site is exclusively located on p48. The chain is DNA primase small subunit (PRI1) from Saccharomyces cerevisiae (strain ATCC 204508 / S288c) (Baker's yeast).